Here is a 796-residue protein sequence, read N- to C-terminus: Choline transporter-like 2 (796 aa).

N-linked (GlcNAc...) asparagine glycosylation occurs at N20. The helical transmembrane segment at 35-55 (PCLLLFVLFLGGWAFIAQYAI) threads the bilayer. N-linked (GlcNAc...) asparagine glycosylation is found at N209 and N284. The next 4 membrane-spanning stretches (helical) occupy residues 304–324 (WSIV…YIAL), 332–352 (ILWF…YFSV), 386–406 (LYLS…VIVL), and 431–451 (VFFP…AIGV). N-linked (GlcNAc...) asparagine glycans are attached at residues N488 and N520. 5 consecutive transmembrane segments (helical) span residues 542-562 (VFGF…VLAS), 585-605 (FFQT…ILAI), 626-648 (AVTR…FLKF), 691-711 (FLFF…TYYF), and 724-744 (IAVP…VFFG).

The protein belongs to the CTL (choline transporter-like) family.

It localises to the membrane. The sequence is that of Choline transporter-like 2 from Drosophila melanogaster (Fruit fly).